A 451-amino-acid polypeptide reads, in one-letter code: Serine/threonine-protein phosphatase 2A 55 kDa regulatory subunit B delta isoform (451 aa).

WD repeat units lie at residues 30 to 69, 95 to 136, 179 to 217, 228 to 268, 287 to 325, 342 to 383, and 418 to 451; these read AEAD…KSRP, EIEE…KRAE, AHTY…RSFN, ELTE…LCDR, EIIS…RPVE, ENDC…DITL, and DFNK…DKIN.

Belongs to the phosphatase 2A regulatory subunit B family. As to quaternary structure, PP2A consists of a common heterodimeric core enzyme, composed of a 36 kDa catalytic subunit (subunit C) and a 65 kDa constant regulatory subunit (PR65 or subunit A), that associates with a variety of regulatory subunits.

The protein resides in the cytoplasm. In terms of biological role, substrate-recognition subunit of protein phosphatase 2A (PP2A) that plays a key role in cell cycle by controlling mitosis entry and exit. The activity of PP2A complexes containing PPP2R2D (PR55-delta) fluctuate during the cell cycle: the activity is high in interphase and low in mitosis. This chain is Serine/threonine-protein phosphatase 2A 55 kDa regulatory subunit B delta isoform (PPP2R2D), found in Gallus gallus (Chicken).